We begin with the raw amino-acid sequence, 504 residues long: Cytochrome P450 monooxygenase gsfF (504 aa).

The signal sequence occupies residues 1–16 (MTVLFILSAGLVAVFG). Residues N97 and N150 are each glycosylated (N-linked (GlcNAc...) asparagine). Heme is bound at residue C450.

The protein belongs to the cytochrome P450 family. Requires heme as cofactor.

It catalyses the reaction griseophenone B + reduced [NADPH--hemoprotein reductase] + O2 + H(+) = desmethyl-dehydrogriseofulvin + oxidized [NADPH--hemoprotein reductase] + 2 H2O. It participates in secondary metabolite biosynthesis; terpenoid biosynthesis. Its function is as follows. Cytochrome P450 monooxygenase; part of the gene cluster that mediates the biosynthesis of griseofulvin, an important antifungal drug that has been in use for a long time for treating dermatophyte infections. The first step of the pathway is the formation of the heptaketide backbone by gsfA which is initiated by priming with acetyl-CoA, followed by sequential condensations of 6 malonyl-CoA units. The resulting benzophenone can undergo a spontaneous dehydration to form norlichexanthone. However, the true precursor for the griseofulvin biosynthesis is not norlichexanthone, but the heptaketide benzophenone that is O-methylated at 3-OH by gsfB to produce griseophenone D which is further methylated at 9-OH by gsfC to yield griseophenone C. Griseophenone C is then substrate of halogenase gsfI which is responsible for the regio-specific chlorination at the C13 position to form griseophenone B. The cytochrome P450 gsfF catalyzes the coupling of orcinol and phloroglucinol rings in griseophenone B to form desmethyl-dehydrogriseofulvin A which is further methylated at 5-OH by gsfD to yield dehydrogriseofulvin. Finally, gsfE performs stereospecific reduction of enone 18 of dehydrogriseofulvin to afford the final product griseofulvin. The chain is Cytochrome P450 monooxygenase gsfF from Penicillium aethiopicum.